Consider the following 167-residue polypeptide: UPF0179 protein Pars_2336 (167 aa).

It belongs to the UPF0179 family.

This chain is UPF0179 protein Pars_2336, found in Pyrobaculum arsenaticum (strain DSM 13514 / JCM 11321 / PZ6).